Reading from the N-terminus, the 284-residue chain is Diaminopimelate epimerase (284 aa).

Substrate contacts are provided by N21, Q54, and N74. C83 acts as the Proton donor in catalysis. Substrate is bound by residues 84 to 85, N167, N200, and 218 to 219; these read GN and ER. C227 serves as the catalytic Proton acceptor. 228–229 provides a ligand contact to substrate; sequence GS.

This sequence belongs to the diaminopimelate epimerase family. Homodimer.

The protein localises to the cytoplasm. It catalyses the reaction (2S,6S)-2,6-diaminopimelate = meso-2,6-diaminopimelate. The protein operates within amino-acid biosynthesis; L-lysine biosynthesis via DAP pathway; DL-2,6-diaminopimelate from LL-2,6-diaminopimelate: step 1/1. Its function is as follows. Catalyzes the stereoinversion of LL-2,6-diaminopimelate (L,L-DAP) to meso-diaminopimelate (meso-DAP), a precursor of L-lysine and an essential component of the bacterial peptidoglycan. The sequence is that of Diaminopimelate epimerase from Buchnera aphidicola subsp. Acyrthosiphon pisum (strain APS) (Acyrthosiphon pisum symbiotic bacterium).